Consider the following 209-residue polypeptide: Molybdenum cofactor guanylyltransferase (209 aa).

GTP-binding positions include 16 to 18, K28, N56, D69, and D103; that span reads LAG. D103 contacts Mg(2+).

The protein belongs to the MobA family. As to quaternary structure, monomer. It depends on Mg(2+) as a cofactor.

The protein localises to the cytoplasm. It catalyses the reaction Mo-molybdopterin + GTP + H(+) = Mo-molybdopterin guanine dinucleotide + diphosphate. In terms of biological role, transfers a GMP moiety from GTP to Mo-molybdopterin (Mo-MPT) cofactor (Moco or molybdenum cofactor) to form Mo-molybdopterin guanine dinucleotide (Mo-MGD) cofactor. The polypeptide is Molybdenum cofactor guanylyltransferase (Rhizobium johnstonii (strain DSM 114642 / LMG 32736 / 3841) (Rhizobium leguminosarum bv. viciae)).